The following is a 582-amino-acid chain: 2-succinyl-5-enolpyruvyl-6-hydroxy-3-cyclohexene-1-carboxylate synthase (582 aa).

This sequence belongs to the TPP enzyme family. MenD subfamily. As to quaternary structure, homodimer. It depends on Mg(2+) as a cofactor. The cofactor is Mn(2+). Thiamine diphosphate is required as a cofactor.

It carries out the reaction isochorismate + 2-oxoglutarate + H(+) = 5-enolpyruvoyl-6-hydroxy-2-succinyl-cyclohex-3-ene-1-carboxylate + CO2. It functions in the pathway quinol/quinone metabolism; 1,4-dihydroxy-2-naphthoate biosynthesis; 1,4-dihydroxy-2-naphthoate from chorismate: step 2/7. Its pathway is cofactor biosynthesis; phylloquinone biosynthesis. Functionally, catalyzes the thiamine diphosphate-dependent decarboxylation of 2-oxoglutarate and the subsequent addition of the resulting succinic semialdehyde-thiamine pyrophosphate anion to isochorismate to yield 2-succinyl-5-enolpyruvyl-6-hydroxy-3-cyclohexene-1-carboxylate (SEPHCHC). In Prochlorococcus marinus (strain MIT 9313), this protein is 2-succinyl-5-enolpyruvyl-6-hydroxy-3-cyclohexene-1-carboxylate synthase.